The sequence spans 154 residues: Egg-lysin (154 aa).

Positions 1 to 18 are cleaved as a signal peptide; sequence MKLLVLCIFAMMATLAMS.

In terms of assembly, homodimer. As to expression, sperm.

In terms of biological role, dissolves the egg vitelline layer nonenzymatically during fertilization. It creates a hole of about 3 mu-m in diameter through which the sperm pass. The chain is Egg-lysin from Haliotis walallensis (Flat abalone).